A 244-amino-acid chain; its full sequence is Putative ribosomal recycling factor, mitochondrial (244 aa).

Belongs to the RRF family.

The protein resides in the mitochondrion. Necessary for protein synthesis in mitochondria. Functions as a ribosome recycling factor in mitochondria. The protein is Putative ribosomal recycling factor, mitochondrial (rrf1) of Schizosaccharomyces pombe (strain 972 / ATCC 24843) (Fission yeast).